Here is a 211-residue protein sequence, read N- to C-terminus: Transcription antitermination protein NusB (211 aa).

The protein belongs to the NusB family.

Functionally, involved in transcription antitermination. Required for transcription of ribosomal RNA (rRNA) genes. Binds specifically to the boxA antiterminator sequence of the ribosomal RNA (rrn) operons. The polypeptide is Transcription antitermination protein NusB (Trichormus variabilis (strain ATCC 29413 / PCC 7937) (Anabaena variabilis)).